Reading from the N-terminus, the 398-residue chain is Histidinol-phosphate aminotransferase (398 aa).

Polar residues predominate over residues 1–10 (MTGQRATPQP). The disordered stretch occupies residues 1–30 (MTGQRATPQPTLDDLPLRDDLRGKSPYGAP). Lys234 carries the post-translational modification N6-(pyridoxal phosphate)lysine.

The protein belongs to the class-II pyridoxal-phosphate-dependent aminotransferase family. Histidinol-phosphate aminotransferase subfamily. As to quaternary structure, homodimer. Requires pyridoxal 5'-phosphate as cofactor.

It carries out the reaction L-histidinol phosphate + 2-oxoglutarate = 3-(imidazol-4-yl)-2-oxopropyl phosphate + L-glutamate. It functions in the pathway amino-acid biosynthesis; L-histidine biosynthesis; L-histidine from 5-phospho-alpha-D-ribose 1-diphosphate: step 7/9. This is Histidinol-phosphate aminotransferase from Mycolicibacterium paratuberculosis (strain ATCC BAA-968 / K-10) (Mycobacterium paratuberculosis).